Reading from the N-terminus, the 670-residue chain is Histone-lysine N-methyltransferase, H3 lysine-9 specific SUVH1 (670 aa).

Positions 53 to 140 (YPFSSSQANQ…RPISRPENMN (88 aa)) are disordered. Residues 68–79 (NQAQYPPQHQQP) are compositionally biased toward low complexity. Over residues 123–133 (VKRRIPKKRPI) the composition is skewed to basic residues. In terms of domain architecture, YDG spans 211–357 (GIVPGVEIGD…HNTFKYKLVR (147 aa)). Positions 432–492 (FGCDCANLCK…TCKNKVTQMG (61 aa)) constitute a Pre-SET domain. Zn(2+)-binding residues include Cys-434, Cys-436, Cys-440, Cys-447, Cys-449, Cys-475, Cys-479, Cys-481, and Cys-484. Residues 495-639 (VRLEVFKTAN…PMTELTYDYG (145 aa)) form the SET domain. S-adenosyl-L-methionine contacts are provided by residues 505–507 (RGW), Asp-541, Tyr-543, Arg-593, and 596–597 (NH). Residues Cys-599, Cys-658, Cys-660, and Cys-665 each contribute to the Zn(2+) site. The region spanning 654 to 670 (GKRKCFCGSAYCRGSFG) is the Post-SET domain.

It belongs to the class V-like SAM-binding methyltransferase superfamily. Histone-lysine methyltransferase family. Suvar3-9 subfamily. Expressed in leaves stems and flowers.

Its subcellular location is the nucleus. The protein resides in the chromosome. The protein localises to the centromere. It carries out the reaction L-lysyl(9)-[histone H3] + 2 S-adenosyl-L-methionine = N(6),N(6)-dimethyl-L-lysyl(9)-[histone H3] + 2 S-adenosyl-L-homocysteine + 2 H(+). Histone methyltransferase. Methylates 'Lys-9' of histone H3. H3 'Lys-9' methylation represents a specific tag for epigenetic transcriptional repression. The polypeptide is Histone-lysine N-methyltransferase, H3 lysine-9 specific SUVH1 (SUVH1) (Arabidopsis thaliana (Mouse-ear cress)).